A 539-amino-acid polypeptide reads, in one-letter code: 4-hydroxybenzoate--CoA/benzoate--CoA ligase (539 aa).

The protein belongs to the ATP-dependent AMP-binding enzyme family. Benzoate-CoA ligase subfamily. In terms of assembly, homodimer. In terms of processing, the N-terminus is blocked.

It catalyses the reaction 4-hydroxybenzoate + ATP + CoA = 4-hydroxybenzoyl-CoA + AMP + diphosphate. It carries out the reaction benzoate + ATP + CoA = benzoyl-CoA + AMP + diphosphate. In terms of biological role, catalyzes the ligation of 4-hydroxybenzoate, benzoate or cyclohex-1,4-dienecarboxylate and CoA at the expense of ATP. The enzyme shows low activity towards cyclo-2,5-dienecarboxylate, 4-fluorobenzoate, 4-chlorobenzoate and 2-methoxybenzoate. The protein is 4-hydroxybenzoate--CoA/benzoate--CoA ligase (hbaA) of Rhodopseudomonas palustris (strain ATCC BAA-98 / CGA009).